The chain runs to 394 residues: Serine palmitoyltransferase (394 aa).

Pyridoxal 5'-phosphate contacts are provided by residues 111–112 (GF), S183, H211, and T239. K242 is subject to N6-(pyridoxal phosphate)lysine.

It belongs to the class-II pyridoxal-phosphate-dependent aminotransferase family. The cofactor is pyridoxal 5'-phosphate.

The catalysed reaction is L-serine + hexadecanoyl-CoA + H(+) = 3-oxosphinganine + CO2 + CoA. Its pathway is lipid metabolism; sphingolipid metabolism. Its function is as follows. Involved in de novo bacterial ceramide synthesis. Catalyzes the condensation of L-serine with palmitoyl-CoA (hexadecanoyl-CoA) to produce 3-oxosphinganine. Also capable of using alanine as substrate leading to the formation of 1-deoxysphinganine (1-deoxySa). Contributes to the levels of endogenous sphingolipids in its host. This is Serine palmitoyltransferase from Bacteroides ovatus (strain ATCC 8483 / DSM 1896 / JCM 5824 / BCRC 10623 / CCUG 4943 / NCTC 11153).